Reading from the N-terminus, the 109-residue chain is Nucleoid-associated protein LJ_0424 (109 aa).

This sequence belongs to the YbaB/EbfC family. In terms of assembly, homodimer.

Its subcellular location is the cytoplasm. It is found in the nucleoid. Binds to DNA and alters its conformation. May be involved in regulation of gene expression, nucleoid organization and DNA protection. This chain is Nucleoid-associated protein LJ_0424, found in Lactobacillus johnsonii (strain CNCM I-12250 / La1 / NCC 533).